The primary structure comprises 104 residues: Nucleoid-associated protein Moth_0028 (104 aa).

Belongs to the YbaB/EbfC family. In terms of assembly, homodimer.

Its subcellular location is the cytoplasm. The protein localises to the nucleoid. In terms of biological role, binds to DNA and alters its conformation. May be involved in regulation of gene expression, nucleoid organization and DNA protection. The polypeptide is Nucleoid-associated protein Moth_0028 (Moorella thermoacetica (strain ATCC 39073 / JCM 9320)).